Here is a 123-residue protein sequence, read N- to C-terminus: MPSTGTLVIIFAIVLILCIMLLFFYKTVEAGKPSVLPPPIPPPTPPPSKKKYDHNEYMEKTDLEPEVKKNHRKWANEAEHLISSSVKGLENLDEAAFLANHKGHGFRTFEHAKSLFKEFLKKY.

Residues G5–Y25 form a helical membrane-spanning segment. Residues K32–D53 are disordered. Over residues V35–P47 the composition is skewed to pro residues.

Belongs to the asfivirus CP123L family.

Its subcellular location is the host membrane. The protein resides in the virion. This is an uncharacterized protein from Ornithodoros (relapsing fever ticks).